A 1280-amino-acid polypeptide reads, in one-letter code: Dynactin subunit 1 (1280 aa).

The interval 1–26 (MAQSKRHMYNRTPSGSRMSTEASARP) is disordered. A compositionally biased stretch (polar residues) spans 11 to 22 (RTPSGSRMSTEA). The region spanning 48 to 90 (GATLFATGKWVGVILDEAKGKNDGTVQGRKYFTCDEGHGIFVR) is the CAP-Gly domain. The interval 99 to 223 (DGADTTSPET…SKEEEGLRDQ (125 aa)) is disordered. The segment covering 102–114 (DTTSPETPDSSAS) has biased composition (polar residues). Residues threonine 108, threonine 145, threonine 146, and threonine 147 each carry the phosphothreonine modification. A compositionally biased stretch (basic residues) spans 129-152 (SKLRGLKPKKAPTARKTTTRRPKP). The span at 161–205 (AGPSSSLGPSGSASAGELSSSEPSTPAQTPLAAPIIPTPALTSPG) shows a compositional bias: low complexity. Residue serine 179 is modified to Phosphoserine; by PLK1. Serine 212 bears the Phosphoserine; by CDK1 mark. Over residues 214–223 (SKEEEGLRDQ) the composition is skewed to basic and acidic residues. Coiled coils occupy residues 214-513 (SKEE…ADYQ) and 942-1048 (LKLE…EGLR). Residues 910–1280 (EYDAERPPSK…LHQLHGRLIS (371 aa)) form an interaction with HPS6 region. A disordered region spans residues 1064 to 1089 (GEEQQRGGTPGQAPGALPGPGPVKDS). The stretch at 1184 to 1213 (SAQLMEQVAQLKSLSDTIEKLKDEVLKETV) forms a coiled coil.

Belongs to the dynactin 150 kDa subunit family. In terms of assembly, monomer and homodimer. Subunit of dynactin, a multiprotein complex part of a tripartite complex with dynein and a adapter, such as BICDL1, BICD2 or HOOK3. The dynactin complex is built around ACTR1A/ACTB filament and consists of an actin-related filament composed of a shoulder domain, a pointed end and a barbed end. Its length is defined by its flexible shoulder domain. The soulder is composed of 2 DCTN1 subunits, 4 DCTN2 and 2 DCTN3. DCTN1/p150(glued) binds directly to microtubules and to cytoplasmic dynein. The 4 DCNT2 (via N-terminus) bind the ACTR1A filament and act as molecular rulers to determine the length. The pointed end is important for binding dynein-dynactin cargo adapters. Consists of 4 subunits: ACTR10, DCNT4, DCTN5 and DCTN6. The barbed end is composed of a CAPZA1:CAPZB heterodimers, which binds ACTR1A/ACTB filament and dynactin and stabilizes dynactin. Interacts with the C-terminus of MAPRE1, MAPRE2 and MAPRE3. Interacts (via C-terminus) with SNX6. Interacts with CLN3, DYNAP, ECPAS and FBXL5. Interacts with MISP; this interaction regulates its distribution at the cell cortex. Interacts with CEP131. Interacts with CEP126. Interacts with CLIP1. Interacts with dynein intermediate chain and dynein heavy chain. Interacts with PLK1 (via POLO-box domain). Interacts with TBCB. Binds preferentially to tyrosinated microtubules than to detyrosinated microtubules. Interacts with PARD6A. Interacts with HPS6. Interacts with KIF3A. Interacts with BICD2. Interacts with DST (isoform 9). Interacts with DST (isoform 1). Identified in a complex with MREG and RILP. Interacts with BCCIP (isoform 2/alpha). Interacts with DCDC1. Interacts with AKNA. Interacts with DYNC1I2. Interacts with RUFY3 and RUFY4. Ubiquitinated by a SCF complex containing FBXL5, leading to its degradation by the proteasome. Post-translationally, phosphorylation by SLK at Thr-145, Thr-146 and Thr-147 targets DCTN1 to the centrosome. It is uncertain if SLK phosphorylates all three threonines or one or two of them. PLK1-mediated phosphorylation at Ser-179 is essential for its localization in the nuclear envelope and promotes its dissociation from microtubules during early mitosis and positively regulates nuclear envelope breakdown during prophase. Ubiquitous with a high level expression observed in the brain (at protein level).

Its subcellular location is the cytoplasm. The protein localises to the cytoskeleton. It localises to the microtubule organizing center. The protein resides in the centrosome. It is found in the centriole. Its subcellular location is the spindle. The protein localises to the nucleus envelope. It localises to the cell cortex. Its function is as follows. Part of the dynactin complex that activates the molecular motor dynein for ultra-processive transport along microtubules. Plays a key role in dynein-mediated retrograde transport of vesicles and organelles along microtubules by recruiting and tethering dynein to microtubules. Binds to both dynein and microtubules providing a link between specific cargos, microtubules and dynein. Essential for targeting dynein to microtubule plus ends, recruiting dynein to membranous cargos and enhancing dynein processivity (the ability to move along a microtubule for a long distance without falling off the track). Can also act as a brake to slow the dynein motor during motility along the microtubule. Can regulate microtubule stability by promoting microtubule formation, nucleation and polymerization and by inhibiting microtubule catastrophe in neurons. Inhibits microtubule catastrophe by binding both to microtubules and to tubulin, leading to enhanced microtubule stability along the axon. Plays a role in metaphase spindle orientation. Plays a role in centriole cohesion and subdistal appendage organization and function. Its recruitment to the centriole in a KIF3A-dependent manner is essential for the maintenance of centriole cohesion and the formation of subdistal appendage. Also required for microtubule anchoring at the mother centriole. Plays a role in primary cilia formation. The chain is Dynactin subunit 1 (Dctn1) from Rattus norvegicus (Rat).